The sequence spans 667 residues: DNA ligase (667 aa).

Residues 32-36, 81-82, and Glu-110 contribute to the NAD(+) site; these read DSEYD and SL. Residue Lys-112 is the N6-AMP-lysine intermediate of the active site. Residues Arg-133, Glu-167, Lys-283, and Lys-307 each coordinate NAD(+). Zn(2+) is bound by residues Cys-401, Cys-404, Cys-419, and Cys-424. Residues 586 to 667 form the BRCT domain; it reads EGHPEFSGKT…FVDKQNELNS (82 aa).

The protein belongs to the NAD-dependent DNA ligase family. LigA subfamily. It depends on Mg(2+) as a cofactor. Mn(2+) is required as a cofactor.

The enzyme catalyses NAD(+) + (deoxyribonucleotide)n-3'-hydroxyl + 5'-phospho-(deoxyribonucleotide)m = (deoxyribonucleotide)n+m + AMP + beta-nicotinamide D-nucleotide.. Functionally, DNA ligase that catalyzes the formation of phosphodiester linkages between 5'-phosphoryl and 3'-hydroxyl groups in double-stranded DNA using NAD as a coenzyme and as the energy source for the reaction. It is essential for DNA replication and repair of damaged DNA. The chain is DNA ligase from Staphylococcus aureus (strain Mu3 / ATCC 700698).